A 231-amino-acid polypeptide reads, in one-letter code: Small ribosomal subunit protein uS3 (231 aa).

The 69-residue stretch at 38–106 (IRVYLKNRLK…KTFVNIMEIK (69 aa)) folds into the KH type-2 domain.

It belongs to the universal ribosomal protein uS3 family. As to quaternary structure, part of the 30S ribosomal subunit. Forms a tight complex with proteins S10 and S14.

In terms of biological role, binds the lower part of the 30S subunit head. Binds mRNA in the 70S ribosome, positioning it for translation. The sequence is that of Small ribosomal subunit protein uS3 from Endomicrobium trichonymphae.